Here is a 263-residue protein sequence, read N- to C-terminus: Ribonuclease HII (263 aa).

One can recognise an RNase H type-2 domain in the interval 71–262 (QAIAGIDEVG…VKSMCCDSTN (192 aa)). A divalent metal cation-binding residues include aspartate 77, glutamate 78, and aspartate 172.

Belongs to the RNase HII family. Requires Mn(2+) as cofactor. The cofactor is Mg(2+).

Its subcellular location is the cytoplasm. It catalyses the reaction Endonucleolytic cleavage to 5'-phosphomonoester.. Functionally, endonuclease that specifically degrades the RNA of RNA-DNA hybrids. The chain is Ribonuclease HII from Streptococcus pyogenes serotype M5 (strain Manfredo).